The primary structure comprises 99 residues: Small ribosomal subunit protein bS20 (99 aa).

This sequence belongs to the bacterial ribosomal protein bS20 family.

In terms of biological role, binds directly to 16S ribosomal RNA. In Thermotoga neapolitana (strain ATCC 49049 / DSM 4359 / NBRC 107923 / NS-E), this protein is Small ribosomal subunit protein bS20.